Here is a 330-residue protein sequence, read N- to C-terminus: DNA-directed RNA polymerase subunit alpha (330 aa).

An alpha N-terminal domain (alpha-NTD) region spans residues 1 to 225 (MSDLAIPTIS…KQFASLVSHS (225 aa)). Residues 237–330 (VKYTIPEEKY…KKKNKGIDED (94 aa)) are alpha C-terminal domain (alpha-CTD).

It belongs to the RNA polymerase alpha chain family. Homodimer. The RNAP catalytic core consists of 2 alpha, 1 beta, 1 beta' and 1 omega subunit. When a sigma factor is associated with the core the holoenzyme is formed, which can initiate transcription.

It carries out the reaction RNA(n) + a ribonucleoside 5'-triphosphate = RNA(n+1) + diphosphate. DNA-dependent RNA polymerase catalyzes the transcription of DNA into RNA using the four ribonucleoside triphosphates as substrates. The chain is DNA-directed RNA polymerase subunit alpha from Dehalococcoides mccartyi (strain CBDB1).